The sequence spans 296 residues: 33 kDa chaperonin (296 aa).

Disulfide bonds link Cys236–Cys238 and Cys269–Cys272.

This sequence belongs to the HSP33 family. In terms of processing, under oxidizing conditions two disulfide bonds are formed involving the reactive cysteines. Under reducing conditions zinc is bound to the reactive cysteines and the protein is inactive.

It localises to the cytoplasm. Redox regulated molecular chaperone. Protects both thermally unfolding and oxidatively damaged proteins from irreversible aggregation. Plays an important role in the bacterial defense system toward oxidative stress. This chain is 33 kDa chaperonin, found in Lactobacillus acidophilus (strain ATCC 700396 / NCK56 / N2 / NCFM).